The chain runs to 873 residues: Probable beta-glucosidase A (873 aa).

An N-terminal signal peptide occupies residues 1 to 19; that stretch reads MRFGWLEVAALTAASVANA. N-linked (GlcNAc...) asparagine glycans are attached at residues asparagine 71, asparagine 222, and asparagine 263. Aspartate 291 is an active-site residue. Residues asparagine 326, asparagine 333, asparagine 365, asparagine 453, asparagine 534, asparagine 553, asparagine 575, asparagine 679, and asparagine 725 are each glycosylated (N-linked (GlcNAc...) asparagine). Positions 730 to 765 are disordered; that stretch reads EDSSDDPNYGWEDSEYIPEGARDGSPQPLLKAGGAP.

Belongs to the glycosyl hydrolase 3 family.

The protein resides in the secreted. It catalyses the reaction Hydrolysis of terminal, non-reducing beta-D-glucosyl residues with release of beta-D-glucose.. The protein operates within glycan metabolism; cellulose degradation. Beta-glucosidases are one of a number of cellulolytic enzymes involved in the degradation of cellulosic biomass. Catalyzes the last step releasing glucose from the inhibitory cellobiose. In Neosartorya fischeri (strain ATCC 1020 / DSM 3700 / CBS 544.65 / FGSC A1164 / JCM 1740 / NRRL 181 / WB 181) (Aspergillus fischerianus), this protein is Probable beta-glucosidase A (bglA).